The chain runs to 272 residues: Ribosomal RNA small subunit methyltransferase A (272 aa).

6 residues coordinate S-adenosyl-L-methionine: Asn-18, Leu-20, Gly-45, Glu-66, Asp-91, and Asn-113.

The protein belongs to the class I-like SAM-binding methyltransferase superfamily. rRNA adenine N(6)-methyltransferase family. RsmA subfamily.

Its subcellular location is the cytoplasm. It catalyses the reaction adenosine(1518)/adenosine(1519) in 16S rRNA + 4 S-adenosyl-L-methionine = N(6)-dimethyladenosine(1518)/N(6)-dimethyladenosine(1519) in 16S rRNA + 4 S-adenosyl-L-homocysteine + 4 H(+). Functionally, specifically dimethylates two adjacent adenosines (A1518 and A1519) in the loop of a conserved hairpin near the 3'-end of 16S rRNA in the 30S particle. May play a critical role in biogenesis of 30S subunits. The chain is Ribosomal RNA small subunit methyltransferase A from Pectobacterium atrosepticum (strain SCRI 1043 / ATCC BAA-672) (Erwinia carotovora subsp. atroseptica).